The chain runs to 312 residues: Phospholipid phosphatase 3 (312 aa).

At 1–33 the chain is on the cytoplasmic side; that stretch reads MQSYKYDKAIVPESKNGGSPALNNNPRKGGSKR. The residue at position 19 (Ser19) is a Phosphoserine. A helical membrane pass occupies residues 34-54; sequence VLLICLDLFCLFMAALPFLII. Over 55-85 the chain is Extracellular; it reads ETSTIKPYRRGFYCNDESIKYPLKVSETIND. The helical transmembrane segment at 86–106 threads the bilayer; sequence AVLCAVGIVIAILAIITGEFY. The Cytoplasmic segment spans residues 107–123; sequence RIYYLKEKSRSTTQNPY. Residues 109 to 110 carry the Dityrosine basolateral targeting motif motif; that stretch reads YY. Residues 124 to 144 form a helical membrane-spanning segment; it reads VAALYKQVGCFLFGCAISQSF. Over 145 to 194 the chain is Extracellular; the sequence is TDIAKVSIGRLRPHFLSVCDPDFSQINCSEGYIQNYRCRGEDSKVQEARK. Residues 149 to 157 are phosphatase sequence motif I; that stretch reads KVSIGRLRP. An N-linked (GlcNAc...) asparagine glycan is attached at Asn171. Residues 183 to 185 carry the Integrin-binding motif motif; that stretch reads RGE. The chain crosses the membrane as a helical span at residues 195-215; the sequence is SFFSGHASFSMFTMLYLVLYL. The segment at 197-200 is phosphatase sequence motif II; it reads FSGH. Residue His200 is the Proton donors of the active site. The Cytoplasmic segment spans residues 216-226; that stretch reads QARFTWRGARL. Residues 227 to 244 traverse the membrane as a helical segment; the sequence is LRPLLQFTLLMMAFYTGL. The segment at 245–256 is phosphatase sequence motif III; the sequence is SRVSDYKHHPSD. The Extracellular portion of the chain corresponds to 245-258; the sequence is SRVSDYKHHPSDVL. His252 (nucleophile) is an active-site residue. The helical transmembrane segment at 259-279 threads the bilayer; sequence AGFAQGALVACCIVFFVSDLF. The tract at residues 276–312 is mediates interaction with CTNND1; the sequence is SDLFKTKTSLSLPAPAIRREILSPVDIIDRNNHHNMV. Over 280-312 the chain is Cytoplasmic; sequence KTKTSLSLPAPAIRREILSPVDIIDRNNHHNMV.

The protein belongs to the PA-phosphatase related phosphoesterase family. Forms functional homodimers and homooligomers that are not required for substrate recognition and catalytic activity. Can also form heterooligomers with other PLPP2 and PLPP3. Interacts with CTNND1; negatively regulates the PLPP3-mediated stabilization of beta-catenin/CTNNB1. In terms of processing, N-glycosylated. Contains high-mannose oligosaccharides. As to expression, detected in lung, cerebellum and heart atrium.

The protein resides in the cell membrane. Its subcellular location is the basolateral cell membrane. It is found in the endoplasmic reticulum membrane. It localises to the endoplasmic reticulum-Golgi intermediate compartment membrane. The protein localises to the golgi apparatus membrane. The protein resides in the golgi apparatus. Its subcellular location is the trans-Golgi network membrane. It is found in the membrane raft. The enzyme catalyses a 1,2-diacyl-sn-glycero-3-phosphate + H2O = a 1,2-diacyl-sn-glycerol + phosphate. The catalysed reaction is 1,2-dihexadecanoyl-sn-glycero-3-phosphate + H2O = 1,2-dihexadecanoyl-sn-glycerol + phosphate. It carries out the reaction 1,2-di-(9Z-octadecenoyl)-sn-glycero-3-phosphate + H2O = 1,2-di-(9Z-octadecenoyl)-sn-glycerol + phosphate. It catalyses the reaction a monoacyl-sn-glycero-3-phosphate + H2O = a monoacylglycerol + phosphate. The enzyme catalyses (9Z)-octadecenoyl-sn-glycero-3-phosphate + H2O = (9Z-octadecenoyl)-glycerol + phosphate. The catalysed reaction is sphing-4-enine 1-phosphate + H2O = sphing-4-enine + phosphate. It carries out the reaction an N-acylsphing-4-enine 1-phosphate + H2O = an N-acylsphing-4-enine + phosphate. It catalyses the reaction N-(octanoyl)-sphing-4-enine-1-phosphate + H2O = N-octanoylsphing-4-enine + phosphate. The enzyme catalyses N-(9Z-octadecenoyl)-ethanolamine phosphate + H2O = N-(9Z-octadecenoyl) ethanolamine + phosphate. It functions in the pathway lipid metabolism; phospholipid metabolism. With respect to regulation, magnesium-independent phospholipid phosphatase. Insensitive to N-ethylmaleimide. In terms of biological role, magnesium-independent phospholipid phosphatase of the plasma membrane that catalyzes the dephosphorylation of a variety of glycerolipid and sphingolipid phosphate esters including phosphatidate/PA, lysophosphatidate/LPA, diacylglycerol pyrophosphate/DGPP, sphingosine 1-phosphate/S1P and ceramide 1-phosphate/C1P. Also acts on N-oleoyl ethanolamine phosphate/N-(9Z-octadecenoyl)-ethanolamine phosphate, a potential physiological compound. Has both an extracellular and an intracellular phosphatase activity, allowing the hydrolysis and the cellular uptake of these bioactive lipid mediators from the milieu, regulating signal transduction in different cellular processes. Through the dephosphorylation of extracellular sphingosine-1-phosphate and the regulation of its extra- and intracellular availability, plays a role in vascular homeostasis, regulating endothelial cell migration, adhesion, survival, proliferation and the production of pro-inflammatory cytokines. By maintaining the appropriate levels of this lipid in the cerebellum, also ensure its proper development and function. Through its intracellular lipid phosphatase activity may act in early compartments of the secretory pathway, regulating the formation of Golgi to endoplasmic reticulum retrograde transport carriers. Its function is as follows. Independently of this phosphatase activity may also function in the Wnt signaling pathway and the stabilization of beta-catenin/CTNNB1, thereby regulating cell proliferation, migration and differentiation in angiogenesis or yet in tumor growth. Also plays a role in integrin-mediated cell-cell adhesion in angiogenesis. The sequence is that of Phospholipid phosphatase 3 from Mus musculus (Mouse).